Here is a 326-residue protein sequence, read N- to C-terminus: ELMO domain-containing protein 1 (326 aa).

Residues 133–306 (QHEEMLLKLW…KFRKRIIKQL (174 aa)) form the ELMO domain.

Its function is as follows. Acts as a GTPase-activating protein (GAP) toward guanine nucleotide exchange factors like ARL2, ARL3, ARF1 and ARF6, but not for GTPases outside the Arf family. In Mus musculus (Mouse), this protein is ELMO domain-containing protein 1 (Elmod1).